The sequence spans 436 residues: Trigger factor (436 aa).

The PPIase FKBP-type domain occupies 161–246; it reads GDQLNIDFVG…VNSVSEAELP (86 aa).

It belongs to the FKBP-type PPIase family. Tig subfamily.

Its subcellular location is the cytoplasm. The catalysed reaction is [protein]-peptidylproline (omega=180) = [protein]-peptidylproline (omega=0). In terms of biological role, involved in protein export. Acts as a chaperone by maintaining the newly synthesized protein in an open conformation. Functions as a peptidyl-prolyl cis-trans isomerase. The polypeptide is Trigger factor (Azotobacter vinelandii (strain DJ / ATCC BAA-1303)).